Consider the following 598-residue polypeptide: Centrosomal protein of 70 kDa (598 aa).

The span at 16–38 (DSTKEPLSTVTSQAQDSSLSANR) shows a compositional bias: polar residues. Residues 16–43 (DSTKEPLSTVTSQAQDSSLSANRPVTEK) are disordered. Coiled-coil stretches lie at residues 99 to 210 (TRQQ…EEDR) and 255 to 317 (TYKG…NIKL). One copy of the TPR repeat lies at 484 to 517 (NGVYPRMNEVYARLGEMNNAVRNLQELLGLDSSS).

As to quaternary structure, directly interacts with tubulin-gamma; this interaction determines centrosomal localization.

Its subcellular location is the cytoplasm. It localises to the cytoskeleton. The protein resides in the microtubule organizing center. It is found in the centrosome. Functionally, plays a role in the organization of both preexisting and nascent microtubules in interphase cells. During mitosis, required for the organization and orientation of the mitotic spindle. The sequence is that of Centrosomal protein of 70 kDa (Cep70) from Rattus norvegicus (Rat).